We begin with the raw amino-acid sequence, 199 residues long: Pro-thyrotropin-releasing hormone (199 aa).

A signal peptide spans 1–22; the sequence is MRAVCVFVLACVAVSGAPGVRG. The segment at 48–90 is disordered; sequence EEQNSENDQPEWMEKRQHPGKRQHPGKREEDLEPEVEMERWRR. Gln64 carries the post-translational modification Pyrrolidone carboxylic acid. Pro66 is modified (proline amide). Pyrrolidone carboxylic acid is present on Gln70. Pro72 is subject to Proline amide. Position 91 is a pyrrolidone carboxylic acid (Gln91). A Proline amide modification is found at Pro93. Gln117 is subject to Pyrrolidone carboxylic acid. Pro119 carries the post-translational modification Proline amide. Disordered regions lie at residues 129–160 and 175–199; these read KRQH…RRCE and TSGA…PGLE. Pyrrolidone carboxylic acid is present on Gln131. Pro133 carries the post-translational modification Proline amide. Composition is skewed to basic and acidic residues over residues 147–160 and 179–190; these read ELEK…RRCE and PEKRQHPGRRAE. Gln152 carries the post-translational modification Pyrrolidone carboxylic acid. Position 154 is a proline amide (Pro154). At Gln183 the chain carries Pyrrolidone carboxylic acid. Pro185 is subject to Proline amide.

Belongs to the TRH family.

It localises to the secreted. Its function is as follows. Functions as a regulator of the biosynthesis of TSH in the anterior pituitary gland and as a neurotransmitter/ neuromodulator in the central and peripheral nervous systems. In Danio rerio (Zebrafish), this protein is Pro-thyrotropin-releasing hormone (trh).